Here is a 130-residue protein sequence, read N- to C-terminus: Putative antitoxin VapB50 (130 aa).

Functionally, possibly the antitoxin component of a type II toxin-antitoxin (TA) system. Its cognate toxin is VapC50. This chain is Putative antitoxin VapB50, found in Mycobacterium tuberculosis (strain ATCC 25618 / H37Rv).